Here is a 435-residue protein sequence, read N- to C-terminus: Tol-Pal system protein TolB (435 aa).

The first 24 residues, 1-24 (MIPMPKMIRSLLLLFCLLPLGAQA), serve as a signal peptide directing secretion.

The protein belongs to the TolB family. The Tol-Pal system is composed of five core proteins: the inner membrane proteins TolA, TolQ and TolR, the periplasmic protein TolB and the outer membrane protein Pal. They form a network linking the inner and outer membranes and the peptidoglycan layer.

Its subcellular location is the periplasm. In terms of biological role, part of the Tol-Pal system, which plays a role in outer membrane invagination during cell division and is important for maintaining outer membrane integrity. In Thioalkalivibrio sulfidiphilus (strain HL-EbGR7), this protein is Tol-Pal system protein TolB.